The following is a 138-amino-acid chain: Ergosterol biosynthetic protein 28 (138 aa).

Residues 17–33 form a helical membrane-spanning segment; the sequence is LPYWLLFISVVSIFNSV. Asn40 carries an N-linked (GlcNAc...) asparagine glycan. 3 helical membrane-spanning segments follow: residues 56-75, 87-107, and 114-131; these read LSAR…RFYG, LTQF…LYFG, and GLSG…WMYL.

The protein belongs to the ERG28 family. As to quaternary structure, heterotetramer of ERG25, ERG26, ERG27 and ERG28. ERG28 acts as a scaffold to tether ERG27 and other 4,4-demethylation-related enzymes, forming a demethylation enzyme complex, in the endoplasmic reticulum. Interacts with ERG25, ERG26 and ERG27. Also interacts with ERG1, ERG3, ERG5, ERG6 and ERG11.

The protein resides in the endoplasmic reticulum membrane. Its function is as follows. Part of the third module of ergosterol biosynthesis pathway that includes the late steps of the pathway. ERG28 has a role as a scaffold to help anchor the catalytic components of the C-4 demethylation complex ERG25, ERG26 and ERG27 to the endoplasmic reticulum. The third module or late pathway involves the ergosterol synthesis itself through consecutive reactions that mainly occur in the endoplasmic reticulum (ER) membrane. Firstly, the squalene synthase ERG9 catalyzes the condensation of 2 farnesyl pyrophosphate moieties to form squalene, which is the precursor of all steroids. Squalene synthase is crucial for balancing the incorporation of farnesyl diphosphate (FPP) into sterol and nonsterol isoprene synthesis. Secondly, the squalene epoxidase ERG1 catalyzes the stereospecific oxidation of squalene to (S)-2,3-epoxysqualene, which is considered to be a rate-limiting enzyme in steroid biosynthesis. Then, the lanosterol synthase ERG7 catalyzes the cyclization of (S)-2,3 oxidosqualene to lanosterol, a reaction that forms the sterol core. In the next steps, lanosterol is transformed to zymosterol through a complex process involving various demethylation, reduction and desaturation reactions. The lanosterol 14-alpha-demethylase ERG11 (also known as CYP51) catalyzes C14-demethylation of lanosterol to produce 4,4'-dimethyl cholesta-8,14,24-triene-3-beta-ol, which is critical for ergosterol biosynthesis. The C-14 reductase ERG24 reduces the C14=C15 double bond of 4,4-dimethyl-cholesta-8,14,24-trienol to produce 4,4-dimethyl-cholesta-8,24-dienol. 4,4-dimethyl-cholesta-8,24-dienol is substrate of the C-4 demethylation complex ERG25-ERG26-ERG27 in which ERG25 catalyzes the three-step monooxygenation required for the demethylation of 4,4-dimethyl and 4alpha-methylsterols, ERG26 catalyzes the oxidative decarboxylation that results in a reduction of the 3-beta-hydroxy group at the C-3 carbon to an oxo group, and ERG27 is responsible for the reduction of the keto group on the C-3. ERG28 has a role as a scaffold to help anchor ERG25, ERG26 and ERG27 to the endoplasmic reticulum and ERG29 regulates the activity of the iron-containing C4-methylsterol oxidase ERG25. Then, the sterol 24-C-methyltransferase ERG6 catalyzes the methyl transfer from S-adenosyl-methionine to the C-24 of zymosterol to form fecosterol. The C-8 sterol isomerase ERG2 catalyzes the reaction which results in unsaturation at C-7 in the B ring of sterols and thus converts fecosterol to episterol. The sterol-C5-desaturase ERG3 then catalyzes the introduction of a C-5 double bond in the B ring to produce 5-dehydroepisterol. The C-22 sterol desaturase ERG5 further converts 5-dehydroepisterol into ergosta-5,7,22,24(28)-tetraen-3beta-ol by forming the C-22(23) double bond in the sterol side chain. Finally, ergosta-5,7,22,24(28)-tetraen-3beta-ol is substrate of the C-24(28) sterol reductase ERG4 to produce ergosterol. The protein is Ergosterol biosynthetic protein 28 of Candida albicans (strain SC5314 / ATCC MYA-2876) (Yeast).